The following is a 376-amino-acid chain: Anhydro-N-acetylmuramic acid kinase (376 aa).

Residue 11-18 (GTSMDGVD) participates in ATP binding.

This sequence belongs to the anhydro-N-acetylmuramic acid kinase family.

It catalyses the reaction 1,6-anhydro-N-acetyl-beta-muramate + ATP + H2O = N-acetyl-D-muramate 6-phosphate + ADP + H(+). It functions in the pathway amino-sugar metabolism; 1,6-anhydro-N-acetylmuramate degradation. The protein operates within cell wall biogenesis; peptidoglycan recycling. Catalyzes the specific phosphorylation of 1,6-anhydro-N-acetylmuramic acid (anhMurNAc) with the simultaneous cleavage of the 1,6-anhydro ring, generating MurNAc-6-P. Is required for the utilization of anhMurNAc either imported from the medium or derived from its own cell wall murein, and thus plays a role in cell wall recycling. The chain is Anhydro-N-acetylmuramic acid kinase from Acinetobacter baylyi (strain ATCC 33305 / BD413 / ADP1).